A 508-amino-acid chain; its full sequence is Asparagine--tRNA ligase (508 aa).

This sequence belongs to the class-II aminoacyl-tRNA synthetase family. As to quaternary structure, homodimer.

Its subcellular location is the cytoplasm. It carries out the reaction tRNA(Asn) + L-asparagine + ATP = L-asparaginyl-tRNA(Asn) + AMP + diphosphate + H(+). This chain is Asparagine--tRNA ligase, found in Streptococcus suis (strain 05ZYH33).